The sequence spans 607 residues: MDAKPWNHTSEAFQASILEDLKIIQKAGAERNAKSSHGSINSRSASPNKATSRRNRAQNGNSNGRASVDNSDDGSKDDLDYSPSVKRKHVNGEGAEKGDHDTSNNGPSITKLRRKVRRTYDTKDGFVAWNTLDDDFRPIVPDQERSRKINPQKGNNNNLLKENKSLKTTAKDLSDISSSSMKKANNSSKPLFSGKLTFKANIPVPTSEVVTENNVTRNVTVYSNQKHLGNESENFNDMEGRAEDISSNELLPTPEEYPYRYNNDYCSACHGPGNFLCCETCPNSFHFTCIDPPIEEKNLPDDAWYCNECKHHSLYNELDEQEELESNVKEEGTMVDVWMQLCTYIDSHNPIQFHLPHSISSFFRGVGSGVMGEYIETDVLKHLKSSRRSNGEERDPLLLKSKSGTPILCFRCHKSALVSQSILACDYCNSYWHPDCLNPPLATLPSNLRKWKCPNHSDHVTPRYRLPEKAKVIRVGLPRGFKNKGNIVIDENEDEPSVQTIQLQGKIRVVPSKPFKLNFLEQIRDNVINLRKMVEQDEQLCIETFSKFDFYATRDCELPLRILCDVANDNLENDDYVLALRDLLRISKWDPNQPVPAPFDLANLLSY.

2 disordered regions span residues 28–114 (GAER…KLRR) and 142–188 (DQER…NNSS). Polar residues predominate over residues 35 to 50 (SSHGSINSRSASPNKA). 2 stretches are compositionally biased toward basic and acidic residues: residues 90 to 102 (VNGE…DHDT) and 161 to 174 (KENK…KDLS). Residues 177-188 (SSSSMKKANNSS) are compositionally biased toward low complexity. 2 consecutive PHD-type zinc fingers follow at residues 263 to 312 (NDYC…CKHH) and 406 to 459 (PILC…HSDH).

This is an uncharacterized protein from Schizosaccharomyces pombe (strain 972 / ATCC 24843) (Fission yeast).